Consider the following 326-residue polypeptide: D-threonate 4-phosphate dehydrogenase (326 aa).

Substrate is bound by residues H138 and T139. A divalent metal cation contacts are provided by H168, H212, and H267. Residues K275, N284, and R293 each contribute to the substrate site.

Belongs to the PdxA family. PdxA2 subfamily. In terms of assembly, homodimer. It depends on a divalent metal cation as a cofactor.

It catalyses the reaction 4-O-phospho-D-threonate + NAD(+) = dihydroxyacetone phosphate + CO2 + NADH. In terms of biological role, catalyzes the NAD-dependent oxidation and subsequent decarboxylation of D-threonate 4-phosphate to produce dihydroxyacetone phosphate (DHAP). Can also use 4-hydroxy-L-threonine 4-phosphate as substrate. The protein is D-threonate 4-phosphate dehydrogenase of Pectobacterium atrosepticum (strain SCRI 1043 / ATCC BAA-672) (Erwinia carotovora subsp. atroseptica).